A 351-amino-acid chain; its full sequence is uncharacterized protein (351 aa).

A signal peptide spans Met1–Ala27. The tract at residues Ala27 to Gly71 is disordered. Over residues Ala30–Asn60 the composition is skewed to basic and acidic residues.

Belongs to the aerolysin family.

This is an uncharacterized protein from Staphylococcus aureus (strain USA300).